Consider the following 876-residue polypeptide: GRB2-associated and regulator of MAPK protein (876 aa).

The tract at residues 9-318 is CABIT; it reads KDVKWSSASF…NLIKGEVWQD (310 aa). Y451 carries the phosphotyrosine modification. Disordered stretches follow at residues 460–569 and 708–741; these read SVKR…TLSY and DRMLGDNSTKQSLSCPALPPRAPKPSEGNALSEP. Over residues 461 to 471 the composition is skewed to polar residues; that stretch reads VKRSGQPLTRS. A compositionally biased stretch (pro residues) spans 532 to 549; sequence PPVPPRSSKPSSPTPSVP. The segment covering 556–569 has biased composition (polar residues); the sequence is VRQQTRSPSPTLSY. Positions 811–876 constitute an SAM domain; the sequence is LSVEEVSKSL…QFINGWRPKM (66 aa).

This sequence belongs to the GAREM family.

In terms of biological role, adapter protein that may provide a link between cell surface epidermal growth factor receptor and the MAPK/ERK signaling pathway. May promote cell proliferation. The protein is GRB2-associated and regulator of MAPK protein (garem1) of Xenopus laevis (African clawed frog).